The sequence spans 152 residues: Antiholin-like protein LrgA (152 aa).

The next 4 helical transmembrane spans lie at 23-43, 45-65, 77-97, and 108-128; these read YSIF…KIIE, FMPI…IALC, VGTA…ISVI, and ILII…TGFS.

This sequence belongs to the CidA/LrgA family. LrgA subfamily.

It localises to the cell membrane. Functionally, inhibits the expression or activity of extracellular murein hydrolases by interacting, possibly with LrgB, with the holin-like proteins CidA and/or CidB. The LrgAB and CidAB proteins may affect the proton motive force of the membrane. May be involved in programmed cell death (PCD), possibly triggering PCD in response to antibiotics and environmental stresses. The chain is Antiholin-like protein LrgA from Staphylococcus epidermidis (strain ATCC 12228 / FDA PCI 1200).